Reading from the N-terminus, the 235-residue chain is Ribonuclease S-2 (235 aa).

A signal peptide spans 1 to 31 (MATVQKSQHSHFFLLVGCIVHLSNFCSTTTA). An RNA-binding site is contributed by glutamine 41. Cysteine 47 and cysteine 54 are disulfide-bonded. Histidine 66 lines the RNA pocket. The active-site Proton donor is histidine 66. A glycan (N-linked (GlcNAc...) asparagine) is linked at asparagine 72. 3 disulfides stabilise this stretch: cysteine 80–cysteine 129, cysteine 189–cysteine 217, and cysteine 200–cysteine 211. Residues 105 to 106 (DL), arginine 108, and phenylalanine 118 each bind RNA. Glutamine 122 is an active-site residue. 125–126 (KH) contacts RNA. The active-site Proton acceptor is histidine 126.

It belongs to the RNase T2 family.

Its subcellular location is the secreted. It localises to the extracellular space. The enzyme catalyses a ribonucleotidyl-ribonucleotide-RNA + H2O = a 3'-end 3'-phospho-ribonucleotide-RNA + a 5'-end dephospho-ribonucleoside-RNA + H(+). Functionally, self-incompatibility (SI) is the inherited ability of a flowering plant to prevent self-fertilization by discriminating between self and non-self pollen during pollination. In many species, self-incompatibility is controlled by the single, multiallelic locus S. The polypeptide is Ribonuclease S-2 (S2) (Antirrhinum hispanicum (Snapdragon)).